The sequence spans 119 residues: Ribonuclease P protein component (119 aa).

This sequence belongs to the RnpA family. In terms of assembly, consists of a catalytic RNA component (M1 or rnpB) and a protein subunit.

It carries out the reaction Endonucleolytic cleavage of RNA, removing 5'-extranucleotides from tRNA precursor.. In terms of biological role, RNaseP catalyzes the removal of the 5'-leader sequence from pre-tRNA to produce the mature 5'-terminus. It can also cleave other RNA substrates such as 4.5S RNA. The protein component plays an auxiliary but essential role in vivo by binding to the 5'-leader sequence and broadening the substrate specificity of the ribozyme. This is Ribonuclease P protein component from Escherichia coli O157:H7.